Reading from the N-terminus, the 1025-residue chain is Multidrug resistance protein MdtC (1025 aa).

The next 12 helical transmembrane spans lie at 3–23 (FFAL…AITL), 333–353 (EVEQ…FLFL), 360–380 (IIPA…MYLC), 387–407 (LSLM…IVVL), 431–451 (VGFT…PLLL), 463–483 (FAVT…TLTP), 528–548 (LVGV…ISIP), 853–873 (VILI…LYES), 875–895 (VHPL…LLAL), 897–917 (LFNA…IGIV), 953–973 (PIMM…LSGG), and 984–1004 (ITIV…TPVV).

The protein belongs to the resistance-nodulation-cell division (RND) (TC 2.A.6) family. MdtC subfamily. In terms of assembly, part of a tripartite efflux system composed of MdtA, MdtB and MdtC. MdtC forms a heteromultimer with MdtB.

It is found in the cell inner membrane. Functionally, the MdtABC tripartite complex confers resistance against novobiocin and deoxycholate. In Escherichia fergusonii (strain ATCC 35469 / DSM 13698 / CCUG 18766 / IAM 14443 / JCM 21226 / LMG 7866 / NBRC 102419 / NCTC 12128 / CDC 0568-73), this protein is Multidrug resistance protein MdtC.